Consider the following 468-residue polypeptide: Acetyl-CoA decarbonylase/synthase complex subunit gamma (468 aa).

Residues 1-60 (MKINSPLEAYKYLPQTNCGECGEATCMAFASKLIDRSGKTSDCPPLIKEKKFAKKLAELD) enclose the 4Fe-4S domain. 4 residues coordinate [4Fe-4S] cluster: Cys18, Cys21, Cys26, and Cys43.

Heterodimer of delta and gamma chains. The ACDS complex is made up of alpha, epsilon, beta, gamma and delta chains with a probable stoichiometry of (alpha(2)epsilon(2))(4)-beta(8)-(gamma(1)delta(1))(8). Requires corrinoid as cofactor. [4Fe-4S] cluster serves as cofactor.

The enzyme catalyses 5,6,7,8-tetrahydrosarcinapterin + methyl-Co(III)-[corrinoid Fe-S protein] = 5-methyltetrahydrosarcinapterin + Co(I)-[corrinoid Fe-S protein] + H(+). Its pathway is one-carbon metabolism; methanogenesis from acetate. Part of a complex that catalyzes the reversible cleavage of acetyl-CoA, allowing growth on acetate as sole source of carbon and energy. This is Acetyl-CoA decarbonylase/synthase complex subunit gamma from Methanosarcina acetivorans (strain ATCC 35395 / DSM 2834 / JCM 12185 / C2A).